Reading from the N-terminus, the 181-residue chain is Ribulose bisphosphate carboxylase small subunit, chloroplastic (181 aa).

The N-terminal 56 residues, 1 to 56 (MASISSSAIATVNRTTSTQASLAAPFTGLKSNVAFPVTKKANNDFSSLPSNGGRVQ), are a transit peptide targeting the chloroplast.

Belongs to the RuBisCO small chain family. In terms of assembly, heterohexadecamer of 8 large and 8 small subunits.

Its subcellular location is the plastid. The protein resides in the chloroplast. Its function is as follows. RuBisCO catalyzes two reactions: the carboxylation of D-ribulose 1,5-bisphosphate, the primary event in carbon dioxide fixation, as well as the oxidative fragmentation of the pentose substrate. Both reactions occur simultaneously and in competition at the same active site. Although the small subunit is not catalytic it is essential for maximal activity. This is Ribulose bisphosphate carboxylase small subunit, chloroplastic from Lactuca sativa (Garden lettuce).